A 410-amino-acid polypeptide reads, in one-letter code: Neuroserpin (410 aa).

A signal peptide spans 1–16 (MYFLGLLSLLVLPSKA). Residues Asn-157 and Asn-401 are each glycosylated (N-linked (GlcNAc...) asparagine).

This sequence belongs to the serpin family. In terms of tissue distribution, detected in embryonic ocular vitreous fluid (at protein level). In the embryo present in retina, brain, cerebellum and spinal cord. In adult, predominantly expressed in the brain.

It is found in the secreted. It localises to the cytoplasmic vesicle. The protein resides in the secretory vesicle lumen. The protein localises to the perikaryon. In terms of biological role, serine protease inhibitor that inhibits plasminogen activators and plasmin but not thrombin. May be involved in the formation or reorganization of synaptic connections as well as for synaptic plasticity in the adult nervous system. May protect neurons from cell damage by tissue-type plasminogen activator. This is Neuroserpin (SERPINI1) from Gallus gallus (Chicken).